A 357-amino-acid polypeptide reads, in one-letter code: tRNA-specific 2-thiouridylase MnmA (357 aa).

Residues Ala6–Ser13 and Leu32 contribute to the ATP site. Cys101 acts as the Nucleophile in catalysis. Cys101 and Cys193 form a disulfide bridge. Residue Gly125 participates in ATP binding. Residues Lys143–Gln145 are interaction with tRNA. Catalysis depends on Cys193, which acts as the Cysteine persulfide intermediate.

Belongs to the MnmA/TRMU family.

The protein localises to the cytoplasm. The enzyme catalyses S-sulfanyl-L-cysteinyl-[protein] + uridine(34) in tRNA + AH2 + ATP = 2-thiouridine(34) in tRNA + L-cysteinyl-[protein] + A + AMP + diphosphate + H(+). Functionally, catalyzes the 2-thiolation of uridine at the wobble position (U34) of tRNA, leading to the formation of s(2)U34. The protein is tRNA-specific 2-thiouridylase MnmA of Mycolicibacterium vanbaalenii (strain DSM 7251 / JCM 13017 / BCRC 16820 / KCTC 9966 / NRRL B-24157 / PYR-1) (Mycobacterium vanbaalenii).